A 95-amino-acid chain; its full sequence is MKKITLFFTALLCLFSTSVLAESNSIPKQCEQLFKETENLIAQAEKQPGTHIQVNKIKSKLNQSKQQILQMELATQLKSCEVGLAKLSNLKSYSE.

A signal peptide spans 1–21; sequence MKKITLFFTALLCLFSTSVLA.

This is an uncharacterized protein from Haemophilus influenzae (strain ATCC 51907 / DSM 11121 / KW20 / Rd).